Consider the following 344-residue polypeptide: uncharacterized protein (344 aa).

An N-terminal signal peptide occupies residues 1–28 (MNKKSLNIVATLGILLVLAFSGCVDQSA).

This sequence belongs to the bacterial solute-binding protein 1 family. WtpA subfamily.

This is an uncharacterized protein from Methanococcus maripaludis (strain C7 / ATCC BAA-1331).